Reading from the N-terminus, the 739-residue chain is Poly(A) polymerase alpha (739 aa).

The segment covering 1–17 has biased composition (low complexity); the sequence is MPFPVTTQGSQQTQPPQ. A disordered region spans residues 1–22; that stretch reads MPFPVTTQGSQQTQPPQRHYGI. 2 positions are modified to phosphoserine: Ser-10 and Ser-24. Residues 100-102, Thr-109, 113-115, Asp-167, Lys-228, Tyr-237, and 246-247 each bind ATP; these read FGS, DID, and GV. Mg(2+) is bound by residues Asp-113, Asp-115, and Asp-167. Glycyl lysine isopeptide (Lys-Gly) (interchain with G-Cter in SUMO) cross-links involve residues Lys-444, Lys-445, Lys-506, and Lys-507. The Nuclear localization signal 1 motif lies at 490-507; it reads RKQLHQLLPSHVLQKRKK. The interval 508 to 643 is ser/Thr-rich; that stretch reads HSTEGVKLTA…TKVPNPIVGV (136 aa). A compositionally biased stretch (low complexity) spans 523–534; the sequence is LDLSMDSDNSMS. A disordered region spans residues 523 to 725; that stretch reads LDLSMDSDNS…SDIPALPANP (203 aa). A compositionally biased stretch (polar residues) spans 535–557; that stretch reads VPSPTSAMKTSPLNSSGSSQGRN. Phosphoserine; by MAPK is present on Ser-537. Phosphoserine is present on Ser-558. Polar residues predominate over residues 566 to 582; it reads ASVTSIQASEVSVPQAN. Low complexity-rich tracts occupy residues 583-594 and 611-622; these read SSESPGGPSSES and TVSRVVSSTRLV. N6-acetyllysine is present on residues Lys-635 and Lys-644. The short motif at 644–659 is the Nuclear localization signal 2 element; that stretch reads KRTSSPNKEESPKKTK. Basic and acidic residues-rich tracts occupy residues 650–660 and 676–686; these read NKEESPKKTKT and GHDKTETKEQV. The tract at residues 671-739 is required for interaction with NUDT21; it reads CLALSGHDKT…KNSIKLRLNR (69 aa). Positions 691 to 715 are enriched in polar residues; the sequence is SAVQSETVPASASLLASQKTSSTDL. An N6-acetyllysine; alternate modification is found at Lys-730. Lys-730 participates in a covalent cross-link: Glycyl lysine isopeptide (Lys-Gly) (interchain with G-Cter in SUMO); alternate. Residue Ser-732 is modified to Phosphoserine. At Lys-734 the chain carries N6-acetyllysine; alternate. Residue Lys-734 forms a Glycyl lysine isopeptide (Lys-Gly) (interchain with G-Cter in SUMO); alternate linkage.

This sequence belongs to the poly(A) polymerase family. Monomer. Found in a complex with CPSF1, FIP1L1 and PAPOLA. Interacts with AHCYL1 and FIP1L1; the interaction with AHCYL1 seems to increase interaction with FIP1L1. Interacts with NUDT21; the interaction is diminished by acetylation. Interacts with KPNB1; the interaction promotes PAP nuclear import and is inhibited by acetylation of PAP. It depends on Mg(2+) as a cofactor. Mn(2+) serves as cofactor. In terms of processing, polysumoylated. Varying sumoylation depending on tissue- and cell-type. Highly sumoylated in bladder and NIH 3T3 cells. Sumoylation is required for nuclear localization and enhances PAP stability. Desumoylated by SENP1. Inhibits polymerase activity. Hyperphosphorylation on multiple CDK2 consensus and non-consensus sites in the C-terminal Ser/Thr-rich region represses PAP activity in late M-phase. Phosphorylation/dephosphorylation may regulate the interaction between PAP and CPSF. Post-translationally, acetylated in the C-terminus. Acetylation decreases interaction with NUDT21 and KPNB1, and inhibits nuclear localization through inhibiting binding to the importin alpha/beta complex. In terms of tissue distribution, expressed in brain, thymus, lung, kidney, bladder, testis and spleen.

The protein resides in the nucleus. The catalysed reaction is RNA(n) + ATP = RNA(n)-3'-adenine ribonucleotide + diphosphate. Functionally, polymerase that creates the 3'-poly(A) tail of mRNA's. Also required for the endoribonucleolytic cleavage reaction at some polyadenylation sites. May acquire specificity through interaction with a cleavage and polyadenylation specificity factor (CPSF) at its C-terminus. The chain is Poly(A) polymerase alpha (Papola) from Mus musculus (Mouse).